Reading from the N-terminus, the 195-residue chain is Small ribosomal subunit protein uS5 (195 aa).

An S5 DRBM domain is found at 22–85 (IVEKLVHINR…EEAKKSMIRV (64 aa)). Residues 164 to 195 (QVAAKRGKKVSDVIGRRADGASAAQPAADAEG) form a disordered region. The segment covering 172–182 (KVSDVIGRRAD) has biased composition (basic and acidic residues). Residues 183-195 (GASAAQPAADAEG) show a composition bias toward low complexity.

This sequence belongs to the universal ribosomal protein uS5 family. Part of the 30S ribosomal subunit. Contacts proteins S4 and S8.

With S4 and S12 plays an important role in translational accuracy. In terms of biological role, located at the back of the 30S subunit body where it stabilizes the conformation of the head with respect to the body. The chain is Small ribosomal subunit protein uS5 from Phenylobacterium zucineum (strain HLK1).